A 338-amino-acid chain; its full sequence is Ketol-acid reductoisomerase (NADP(+)) (338 aa).

A KARI N-terminal Rossmann domain is found at 1 to 181 (MKVYYDKDAD…GGGKAGIIET (181 aa)). NADP(+) is bound by residues 24–27 (YGSQ), Arg47, and Ser52. His107 is an active-site residue. NADP(+) is bound at residue Gly133. Residues 182 to 327 (NFREETETDL…EKLRAMMPWI (146 aa)) enclose the KARI C-terminal knotted domain. 4 residues coordinate Mg(2+): Asp190, Glu194, Glu226, and Glu230. Substrate is bound at residue Ser251.

It belongs to the ketol-acid reductoisomerase family. The cofactor is Mg(2+).

It carries out the reaction (2R)-2,3-dihydroxy-3-methylbutanoate + NADP(+) = (2S)-2-acetolactate + NADPH + H(+). The enzyme catalyses (2R,3R)-2,3-dihydroxy-3-methylpentanoate + NADP(+) = (S)-2-ethyl-2-hydroxy-3-oxobutanoate + NADPH + H(+). It participates in amino-acid biosynthesis; L-isoleucine biosynthesis; L-isoleucine from 2-oxobutanoate: step 2/4. It functions in the pathway amino-acid biosynthesis; L-valine biosynthesis; L-valine from pyruvate: step 2/4. Involved in the biosynthesis of branched-chain amino acids (BCAA). Catalyzes an alkyl-migration followed by a ketol-acid reduction of (S)-2-acetolactate (S2AL) to yield (R)-2,3-dihydroxy-isovalerate. In the isomerase reaction, S2AL is rearranged via a Mg-dependent methyl migration to produce 3-hydroxy-3-methyl-2-ketobutyrate (HMKB). In the reductase reaction, this 2-ketoacid undergoes a metal-dependent reduction by NADPH to yield (R)-2,3-dihydroxy-isovalerate. This chain is Ketol-acid reductoisomerase (NADP(+)), found in Variovorax paradoxus (strain S110).